The primary structure comprises 80 residues: Metallothionein-like protein type 2, MT2-22 (80 aa).

Belongs to the metallothionein superfamily. Type 15 family.

Functionally, metallothioneins have a high content of cysteine residues that bind various heavy metals. The protein is Metallothionein-like protein type 2, MT2-22 of Brassica juncea (Indian mustard).